The following is a 221-amino-acid chain: Glutathione S-transferase A3 (221 aa).

Residue Ala-2 is modified to N-acetylalanine. One can recognise a GST N-terminal domain in the interval 3 to 83 (GKPVLHYFDG…YIASKYNLYG (81 aa)). Residue Lys-4 is modified to N6-succinyllysine. Residues Tyr-9, Arg-45, 54 to 55 (QV), and 67 to 68 (QT) each bind glutathione. The GST C-terminal domain occupies 85–207 (DMKERAIIDM…LQPGSQRKPF (123 aa)).

In terms of assembly, homodimer.

It localises to the cytoplasm. The enzyme catalyses RX + glutathione = an S-substituted glutathione + a halide anion + H(+). It carries out the reaction androst-5-ene-3,17-dione = androst-4-ene-3,17-dione. It catalyses the reaction pregn-5-ene-3,20-dione = progesterone. Conjugation of reduced glutathione to a wide number of exogenous and endogenous hydrophobic electrophiles. Catalyzes isomerization reactions that contribute to the biosynthesis of steroid hormones. Efficiently catalyze obligatory double-bond isomerizations of delta(5)-androstene-3,17-dione and delta(5)-pregnene-3,20-dione, precursors to testosterone and progesterone, respectively. Has a high catalytic activity for aflatoxin B1-8,9 epoxide. The polypeptide is Glutathione S-transferase A3 (Mus musculus (Mouse)).